A 177-amino-acid chain; its full sequence is Large ribosomal subunit protein uL6 (177 aa).

It belongs to the universal ribosomal protein uL6 family. As to quaternary structure, part of the 50S ribosomal subunit.

Its function is as follows. This protein binds to the 23S rRNA, and is important in its secondary structure. It is located near the subunit interface in the base of the L7/L12 stalk, and near the tRNA binding site of the peptidyltransferase center. The sequence is that of Large ribosomal subunit protein uL6 from Acidovorax ebreus (strain TPSY) (Diaphorobacter sp. (strain TPSY)).